We begin with the raw amino-acid sequence, 101 residues long: Trp operon repressor homolog (101 aa).

A DNA-binding region spans residues 59-82; that stretch reads QREIQQNLNTSAATITRGSNMIKT.

Belongs to the TrpR family. As to quaternary structure, homodimer.

The protein resides in the cytoplasm. Its function is as follows. This protein is an aporepressor. When complexed with L-tryptophan it binds the operator region of the trp operon and prevents the initiation of transcription. The polypeptide is Trp operon repressor homolog (Haemophilus influenzae (strain 86-028NP)).